The chain runs to 85 residues: Translation initiation factor IF-1 (85 aa).

Residues 1 to 72 (MAKEELLEMR…TKARITYRFM (72 aa)) form the S1-like domain.

This sequence belongs to the IF-1 family. Component of the 30S ribosomal translation pre-initiation complex which assembles on the 30S ribosome in the order IF-2 and IF-3, IF-1 and N-formylmethionyl-tRNA(fMet); mRNA recruitment can occur at any time during PIC assembly.

The protein resides in the cytoplasm. In terms of biological role, one of the essential components for the initiation of protein synthesis. Stabilizes the binding of IF-2 and IF-3 on the 30S subunit to which N-formylmethionyl-tRNA(fMet) subsequently binds. Helps modulate mRNA selection, yielding the 30S pre-initiation complex (PIC). Upon addition of the 50S ribosomal subunit IF-1, IF-2 and IF-3 are released leaving the mature 70S translation initiation complex. This Erythrobacter litoralis (strain HTCC2594) protein is Translation initiation factor IF-1.